The following is a 492-amino-acid chain: Bifunctional purine biosynthesis protein PurH (492 aa).

In terms of domain architecture, MGS-like spans 1–144 (MKKAILSVSN…KNYKHVTTIV (144 aa)).

It belongs to the PurH family.

It carries out the reaction (6R)-10-formyltetrahydrofolate + 5-amino-1-(5-phospho-beta-D-ribosyl)imidazole-4-carboxamide = 5-formamido-1-(5-phospho-D-ribosyl)imidazole-4-carboxamide + (6S)-5,6,7,8-tetrahydrofolate. The enzyme catalyses IMP + H2O = 5-formamido-1-(5-phospho-D-ribosyl)imidazole-4-carboxamide. It functions in the pathway purine metabolism; IMP biosynthesis via de novo pathway; 5-formamido-1-(5-phospho-D-ribosyl)imidazole-4-carboxamide from 5-amino-1-(5-phospho-D-ribosyl)imidazole-4-carboxamide (10-formyl THF route): step 1/1. The protein operates within purine metabolism; IMP biosynthesis via de novo pathway; IMP from 5-formamido-1-(5-phospho-D-ribosyl)imidazole-4-carboxamide: step 1/1. This Staphylococcus aureus (strain MRSA252) protein is Bifunctional purine biosynthesis protein PurH.